The sequence spans 161 residues: Cyclic pyranopterin monophosphate synthase (161 aa).

Residues 75 to 77 (MCH) and 114 to 115 (ME) each bind substrate. Residue Asp-129 is part of the active site.

It belongs to the MoaC family. In terms of assembly, homohexamer; trimer of dimers.

The enzyme catalyses (8S)-3',8-cyclo-7,8-dihydroguanosine 5'-triphosphate = cyclic pyranopterin phosphate + diphosphate. It participates in cofactor biosynthesis; molybdopterin biosynthesis. Its function is as follows. Catalyzes the conversion of (8S)-3',8-cyclo-7,8-dihydroguanosine 5'-triphosphate to cyclic pyranopterin monophosphate (cPMP). The chain is Cyclic pyranopterin monophosphate synthase from Staphylococcus carnosus (strain TM300).